The sequence spans 35 residues: uncharacterized protein (35 aa).

The first 18 residues, 1 to 18 (MRSLVFVQLSLLSWEIFC), serve as a signal peptide directing secretion.

This is an uncharacterized protein from Saccharomyces cerevisiae (strain ATCC 204508 / S288c) (Baker's yeast).